Consider the following 181-residue polypeptide: Ribonuclease HII (181 aa).

The 181-residue stretch at 1–181 (MICGIDEVGR…SLHRKNFKLI (181 aa)) folds into the RNase H type-2 domain. D6, E7, and D98 together coordinate a divalent metal cation.

Belongs to the RNase HII family. The cofactor is Mn(2+). Mg(2+) is required as a cofactor.

The protein localises to the cytoplasm. It carries out the reaction Endonucleolytic cleavage to 5'-phosphomonoester.. Endonuclease that specifically degrades the RNA of RNA-DNA hybrids. This chain is Ribonuclease HII, found in Borreliella afzelii (strain PKo) (Borrelia afzelii).